Here is a 340-residue protein sequence, read N- to C-terminus: Heat-inducible transcription repressor HrcA (340 aa).

Belongs to the HrcA family.

Functionally, negative regulator of class I heat shock genes (grpE-dnaK-dnaJ and groELS operons). Prevents heat-shock induction of these operons. This is Heat-inducible transcription repressor HrcA from Burkholderia thailandensis (strain ATCC 700388 / DSM 13276 / CCUG 48851 / CIP 106301 / E264).